The primary structure comprises 184 residues: Cyclin-dependent kinase inhibitor 1 (184 aa).

Over residues 85–98 (ISSTTLTPLSSPST) the composition is skewed to low complexity. Residues 85-184 (ISSTTLTPLS…IRTRSSCSPY (100 aa)) form a disordered region.

The protein belongs to the CDI family. Interacts with cyd-1; the interaction is direct. In embryos, expression is first seen in pharyngeal primordium and later in all differentiating cells. Post embryonic expression corresponds to developmental patterns of cell cycle progression in many tissues including sex myoblasts, distal tip cells, vulval cells, seam cells, neurons, intestine cells and hypodermal cells.

The protein resides in the nucleus. Its function is as follows. Negative cell-cycle regulator that functions at the G1-to-S-phase transition. Required for suspension of the cell cycle in dauer larvae and starved L1 larvae. In vulval precursor cells (VPCs), a pathway of heterochronic genes acts via cki-1 to maintain VPCs in G1 during the L2 larval stage. Cul-2 may function in ubiquitin-mediated degradation by targeting cki-1 for degradation. Involved in distal tip cell development by repressing and modulating cye-1/cdk-2 activity levels in Z1.aa/Z4.pp and in Z1.ap/Z4.pa. The chain is Cyclin-dependent kinase inhibitor 1 from Caenorhabditis elegans.